The following is a 193-amino-acid chain: MVATGSLSSKNTASISELLDGGSHPGSLLSDFDYWDYVVPEPNLNEVVFEETTCQNLVKMLENCLSKSKQTKLGCSKVLVPEKLTQRIAQDVLRLSSTEPCGLRGCVMHVNLEIENVCKKLDRIVCDASVVPTFELTLVFKQESCSWTSLKDFFFSGGRFSSGLRRTLILSSGFRLVKKKLYSLIGTTVIEEC.

The protein belongs to the DDIT4 family. As to expression, expressed in heart, skeletal muscle and testis.

Its subcellular location is the cytoplasm. In terms of biological role, inhibits cell growth by regulating the TOR signaling pathway upstream of the TSC1-TSC2 complex and downstream of AKT1. In Rattus norvegicus (Rat), this protein is DNA damage-inducible transcript 4-like protein (Ddit4l).